Consider the following 526-residue polypeptide: Probable feruloyl esterase B-2 (526 aa).

The first 18 residues, 1–18 (MTKLSLLPLLTLASAVLA), serve as a signal peptide directing secretion. 2 disulfides stabilise this stretch: Cys27–Cys74 and Cys62–Cys113. Asn52 is a glycosylation site (N-linked (GlcNAc...) asparagine). A glycan (N-linked (GlcNAc...) asparagine) is linked at Asn137. 4 disulfide bridges follow: Cys186/Cys441, Cys255/Cys272, Cys281/Cys291, and Cys503/Cys525. Ser187 (acyl-ester intermediate) is an active-site residue. Asn233 carries N-linked (GlcNAc...) asparagine glycosylation. Residues Asp256, Asp259, Ala261, Asp263, and Ile265 each contribute to the Ca(2+) site. Residues Asp400 and His440 each act as charge relay system in the active site. The N-linked (GlcNAc...) asparagine glycan is linked to Asn516.

It belongs to the tannase family.

The protein localises to the secreted. The catalysed reaction is feruloyl-polysaccharide + H2O = ferulate + polysaccharide.. Functionally, involved in degradation of plant cell walls. Hydrolyzes the feruloyl-arabinose ester bond in arabinoxylans as well as the feruloyl-galactose and feruloyl-arabinose ester bonds in pectin. This is Probable feruloyl esterase B-2 (faeB-2) from Aspergillus fumigatus (strain ATCC MYA-4609 / CBS 101355 / FGSC A1100 / Af293) (Neosartorya fumigata).